The primary structure comprises 605 residues: Replication protein E1 (605 aa).

The Nuclear localization signal signature appears at 80–82 (KRK). 2 positions are modified to phosphoserine; by host: Ser-85 and Ser-93. The short motif at 92–101 (LSPQLESISL) is the Nuclear export signal element. The tract at residues 145–308 (QGTKGLGIVK…TLINHQSANA (164 aa)) is DNA-binding region. The 151-residue stretch at 407 to 557 (INFIEFLTVF…FPLDANHKPQ (151 aa)) folds into the SF3 helicase domain. 433-440 (GPPDTGKS) is a binding site for ATP. Lys-514 is covalently cross-linked (Glycyl lysine isopeptide (Lys-Gly) (interchain with G-Cter in SUMO)).

This sequence belongs to the papillomaviridae E1 protein family. In terms of assembly, can form hexamers. Interacts with E2 protein; this interaction increases E1 DNA binding specificity. Interacts with host DNA polymerase subunit POLA2. Interacts with host single stranded DNA-binding protein RPA1. Interacts with host TOP1; this interaction stimulates the enzymatic activity of TOP1. Phosphorylated. Post-translationally, sumoylated.

Its subcellular location is the host nucleus. The enzyme catalyses Couples ATP hydrolysis with the unwinding of duplex DNA by translocating in the 3'-5' direction.. It catalyses the reaction ATP + H2O = ADP + phosphate + H(+). Its function is as follows. ATP-dependent DNA 3'-5' helicase required for initiation of viral DNA replication. It forms a complex with the viral E2 protein. The E1-E2 complex binds to the replication origin which contains binding sites for both proteins. During the initial step, a dimer of E1 interacts with a dimer of protein E2 leading to a complex that binds the viral origin of replication with high specificity. Then, a second dimer of E1 displaces the E2 dimer in an ATP-dependent manner to form the E1 tetramer. Following this, two E1 monomers are added to each half of the site, which results in the formation of two E1 trimers on the viral ori. Subsequently, two hexamers will be created. The double hexamer acts as a bi-directional helicase machinery and unwinds the viral DNA and then recruits the host DNA polymerase to start replication. This Homo sapiens (Human) protein is Replication protein E1.